Reading from the N-terminus, the 291-residue chain is Phosphate import ATP-binding protein PstB (291 aa).

Residues 45–286 (YSTQNLDLWY…PADKQTEDYI (242 aa)) form the ABC transporter domain. An ATP-binding site is contributed by 77 to 84 (GPSGCGKS).

It belongs to the ABC transporter superfamily. Phosphate importer (TC 3.A.1.7) family. As to quaternary structure, the complex is composed of two ATP-binding proteins (PstB), two transmembrane proteins (PstC and PstA) and a solute-binding protein (PstS).

The protein resides in the cell membrane. The enzyme catalyses phosphate(out) + ATP + H2O = ADP + 2 phosphate(in) + H(+). Its function is as follows. Part of the ABC transporter complex PstSACB involved in phosphate import. Responsible for energy coupling to the transport system. This Staphylococcus epidermidis (strain ATCC 12228 / FDA PCI 1200) protein is Phosphate import ATP-binding protein PstB.